Consider the following 312-residue polypeptide: Ribosomal protein L11 methyltransferase (312 aa).

Residues Thr160, Gly181, Asp203, and Asn246 each contribute to the S-adenosyl-L-methionine site.

The protein belongs to the methyltransferase superfamily. PrmA family.

The protein localises to the cytoplasm. It catalyses the reaction L-lysyl-[protein] + 3 S-adenosyl-L-methionine = N(6),N(6),N(6)-trimethyl-L-lysyl-[protein] + 3 S-adenosyl-L-homocysteine + 3 H(+). In terms of biological role, methylates ribosomal protein L11. The protein is Ribosomal protein L11 methyltransferase of Staphylococcus aureus (strain USA300).